Here is a 348-residue protein sequence, read N- to C-terminus: sn-glycerol-3-phosphate import ATP-binding protein UgpC 3 (348 aa).

The ABC transporter domain occupies I4–I234. G36–S43 lines the ATP pocket.

Belongs to the ABC transporter superfamily. sn-glycerol-3-phosphate importer (TC 3.A.1.1.3) family. In terms of assembly, the complex is composed of two ATP-binding proteins (UgpC), two transmembrane proteins (UgpA and UgpE) and a solute-binding protein (UgpB).

It localises to the cell inner membrane. The catalysed reaction is sn-glycerol 3-phosphate(out) + ATP + H2O = sn-glycerol 3-phosphate(in) + ADP + phosphate + H(+). Functionally, part of the ABC transporter complex UgpBAEC involved in sn-glycerol-3-phosphate (G3P) import. Responsible for energy coupling to the transport system. The polypeptide is sn-glycerol-3-phosphate import ATP-binding protein UgpC 3 (Rhizobium johnstonii (strain DSM 114642 / LMG 32736 / 3841) (Rhizobium leguminosarum bv. viciae)).